Here is a 180-residue protein sequence, read N- to C-terminus: Large ribosomal subunit protein uL5 (180 aa).

The protein belongs to the universal ribosomal protein uL5 family. As to quaternary structure, part of the 50S ribosomal subunit; part of the 5S rRNA/L5/L18/L25 subcomplex. Contacts the 5S rRNA and the P site tRNA. Forms a bridge to the 30S subunit in the 70S ribosome.

Functionally, this is one of the proteins that bind and probably mediate the attachment of the 5S RNA into the large ribosomal subunit, where it forms part of the central protuberance. In the 70S ribosome it contacts protein S13 of the 30S subunit (bridge B1b), connecting the 2 subunits; this bridge is implicated in subunit movement. Contacts the P site tRNA; the 5S rRNA and some of its associated proteins might help stabilize positioning of ribosome-bound tRNAs. This chain is Large ribosomal subunit protein uL5, found in Ralstonia pickettii (strain 12J).